The following is a 938-amino-acid chain: ATP-dependent RNA helicase DDX42 (938 aa).

The segment covering 1–18 has biased composition (gly residues); that stretch reads MNWNKGGPGTKRGFGFGG. Positions 1–114 are disordered; it reads MNWNKGGPGT…KPVDSDSDDD (114 aa). Lys-5 is modified (N6-acetyllysine). Arg-12 is modified (omega-N-methylarginine). Low complexity predominate over residues 35–52; it reads SHSAFGATSSSSGFGKSA. At Ser-58 the chain carries Phosphoserine. The span at 70-84 shows a compositional bias: acidic residues; that stretch reads DEENAYFEDEEEDSS. A phosphoserine mark is found at Ser-96, Ser-104, Ser-109, and Ser-111. The stretch at 116–157 forms a coiled coil; sequence LEAFMAEVEDQAARDMKRLEEKDKERKNVKGIRDDIEEEDDQ. Residues 182 to 203 form a disordered region; that stretch reads EYDSDGNPIAPTKKIIDPLPPI. Phosphoserine is present on Ser-185. Positions 253 to 281 match the Q motif motif; that stretch reads SSFAHFGFDEQLMHQIRKSEYTQPTPIQC. A Helicase ATP-binding domain is found at 284-459; the sequence is VPVALSGRDM…RDILIDPIRV (176 aa). 297–304 is a binding site for ATP; that stretch reads AKTGSGKT. Residues 407 to 410 carry the DEAD box motif; that stretch reads DEAD. The Helicase C-terminal domain maps to 487–632; that stretch reads WLTRRLVEFT…HVSKELLDLA (146 aa). Polar residues-rich tracts occupy residues 737–757 and 786–798; these read LNSV…SPVT and GVNN…NSRE. Residues 737–938 are disordered; it reads LNSVPTNSAQ…PKRKKSRWDS (202 aa). The tract at residues 738-833 is necessary for interaction with TP53BP2; sequence NSVPTNSAQQ…TGNRHSDSPR (96 aa). Ser-754 is modified (phosphoserine). Residues 820–920 are compositionally biased toward basic and acidic residues; it reads SHGETGNRHS…KVDSKTDKTA (101 aa). Lys-899 participates in a covalent cross-link: Glycyl lysine isopeptide (Lys-Gly) (interchain with G-Cter in SUMO2).

This sequence belongs to the DEAD box helicase family. DDX42 subfamily. As to quaternary structure, transient component of the SF3B subcomplex of the 17S U2 SnRNP complex. Interacts (via the C-terminus) with TP53BP2; the interaction is not inhibitied by TP53BP2 ubiquitination and is independent of p53/TP53. As to expression, expressed in several cell lines (at protein level). Expressed in liver, lung, tonsil, thymus, muscle and pancreatic islets.

Its subcellular location is the cytoplasm. The protein resides in the nucleus. It is found in the cajal body. It localises to the nucleus speckle. It catalyses the reaction ATP + H2O = ADP + phosphate + H(+). ATP-dependent RNA helicase that binds to partially double-stranded RNAs (dsRNAs) in order to unwind RNA secondary structures. Unwinding is promoted in the presence of single-strand binding proteins. Also mediates RNA duplex formation thereby displacing the single-strand RNA binding protein. ATP and ADP modulate its activity: ATP binding and hydrolysis by DDX42 triggers RNA strand separation, whereas the ADP-bound form of the protein triggers annealing of complementary RNA strands. Required for assembly of the 17S U2 SnRNP complex of the spliceosome, a large ribonucleoprotein complex that removes introns from transcribed pre-mRNAs: DDX42 associates transiently with the SF3B subcomplex of the 17S U2 SnRNP complex and is released after fulfilling its role in the assembly of 17S U2 SnRNP. Involved in the survival of cells by interacting with TP53BP2 and thereby counteracting the apoptosis-stimulating activity of TP53BP2. Relocalizes TP53BP2 to the cytoplasm. The polypeptide is ATP-dependent RNA helicase DDX42 (Homo sapiens (Human)).